Reading from the N-terminus, the 467-residue chain is Ribulose bisphosphate carboxylase large chain (467 aa).

Lys-5 is subject to N6,N6,N6-trimethyllysine. Residues Asn-114 and Thr-164 each contribute to the substrate site. Lys-166 serves as the catalytic Proton acceptor. Residue Lys-168 participates in substrate binding. The Mg(2+) site is built by Lys-192, Asp-194, and Glu-195. Residue Lys-192 is modified to N6-carboxylysine. His-285 functions as the Proton acceptor in the catalytic mechanism. Substrate contacts are provided by Arg-286, His-318, and Ser-370.

Belongs to the RuBisCO large chain family. Type I subfamily. Heterohexadecamer of 8 large chains and 8 small chains; disulfide-linked. The disulfide link is formed within the large subunit homodimers. Mg(2+) serves as cofactor. The disulfide bond which can form in the large chain dimeric partners within the hexadecamer appears to be associated with oxidative stress and protein turnover.

Its subcellular location is the plastid. The protein resides in the chloroplast. It carries out the reaction 2 (2R)-3-phosphoglycerate + 2 H(+) = D-ribulose 1,5-bisphosphate + CO2 + H2O. The catalysed reaction is D-ribulose 1,5-bisphosphate + O2 = 2-phosphoglycolate + (2R)-3-phosphoglycerate + 2 H(+). In terms of biological role, ruBisCO catalyzes two reactions: the carboxylation of D-ribulose 1,5-bisphosphate, the primary event in carbon dioxide fixation, as well as the oxidative fragmentation of the pentose substrate in the photorespiration process. Both reactions occur simultaneously and in competition at the same active site. The chain is Ribulose bisphosphate carboxylase large chain from Eriodictyon californicum (California yerba santa).